We begin with the raw amino-acid sequence, 105 residues long: MKICKACSSCMVRTYVDGNIIFRCSCGESVQGDSQNLLVSSKVYHTGEMEDKYKIFIKNAPFDPTNCQIKKDCPNCHLDYLTQICIGSQKIIILVCRCGYTSNRG.

Positions 4, 7, 24, 26, 73, 76, and 96 each coordinate Zn(2+). A C4-type; atypical zinc finger spans residues 4–26; the sequence is CKACSSCMVRTYVDGNIIFRCSC.

It belongs to the Asfivirus DNA-directed RNA polymerase RPB9 homolog family. In terms of assembly, part of the viral DNA-directed RNA polymerase that consists of 8 polII-like subunits (RPB1, RPB2, RPB3, RPB5, RPB6, RPB7, RPB9, RPB10), a capping enzyme and a termination factor.

It localises to the host cytoplasm. In terms of biological role, component of the DNA-directed RNA polymerase (RNAP) that catalyzes the transcription in the cytoplasm of viral DNA into RNA using the four ribonucleoside triphosphates as substrates. In African swine fever virus (isolate Pig/Kenya/KEN-50/1950) (ASFV), this protein is DNA-directed RNA polymerase RPB9 homolog.